Reading from the N-terminus, the 103-residue chain is Large ribosomal subunit protein bL25 (103 aa).

This sequence belongs to the bacterial ribosomal protein bL25 family. Part of the 50S ribosomal subunit; part of the 5S rRNA/L5/L18/L25 subcomplex. Contacts the 5S rRNA. Binds to the 5S rRNA independently of L5 and L18.

Functionally, this is one of the proteins that binds to the 5S RNA in the ribosome where it forms part of the central protuberance. This chain is Large ribosomal subunit protein bL25, found in Blochmanniella floridana.